Consider the following 201-residue polypeptide: Casparian strip membrane protein 7 (201 aa).

Residues 1-11 (MEAGEEIEDGE) are compositionally biased toward acidic residues. Residues 1–26 (MEAGEEIEDGEPSTPTYKAHHPPPHL) are disordered. Residues 1-34 (MEAGEEIEDGEPSTPTYKAHHPPPHLPPPMRSSG) are Cytoplasmic-facing. A helical transmembrane segment spans residues 35–55 (VSLVLSVADLVLRFVAIGGTA). Topologically, residues 56 to 86 (GSAIAMATTSETLPFAAPFVRFRAEYSDLPT) are extracellular. Residues 87 to 107 (LMFFVVASSVVCAYLVLSLPA) traverse the membrane as a helical segment. Over 108 to 128 (SVVHVVRPGARSSRAILAFLD) the chain is Cytoplasmic. The helical transmembrane segment at 129–149 (TVMLALLTASASAAAAIVYLA) threads the bilayer. Over 150–171 (HRGSARANWLGICQQFTSFCQR) the chain is Extracellular. A helical membrane pass occupies residues 172-192 (ITASLVGSFAAAVVLVALVFL). At 193–201 (SALSLARRA) the chain is on the cytoplasmic side.

It belongs to the Casparian strip membrane proteins (CASP) family. In terms of assembly, homodimer and heterodimers.

It localises to the cell membrane. Functionally, regulates membrane-cell wall junctions and localized cell wall deposition. Required for establishment of the Casparian strip membrane domain (CSD) and the subsequent formation of Casparian strips, a cell wall modification of the root endodermis that determines an apoplastic barrier between the intraorganismal apoplasm and the extraorganismal apoplasm and prevents lateral diffusion. The sequence is that of Casparian strip membrane protein 7 from Oryza sativa subsp. japonica (Rice).